A 589-amino-acid polypeptide reads, in one-letter code: Probable translation initiation factor IF-2 (589 aa).

Residues 5–219 (IRTPIVCVLG…IMIGLAQRYL (215 aa)) enclose the tr-type G domain. The interval 14–21 (GHVDHGKT) is G1. A GTP-binding site is contributed by 14–21 (GHVDHGKT). A G2 region spans residues 39-43 (AITQH). The tract at residues 75 to 78 (DTPG) is G3. Residues 75-79 (DTPGH) and 129-132 (TKLD) each bind GTP. A G4 region spans residues 129 to 132 (TKLD). The interval 197–199 (SSM) is G5.

This sequence belongs to the TRAFAC class translation factor GTPase superfamily. Classic translation factor GTPase family. IF-2 subfamily.

Its function is as follows. Function in general translation initiation by promoting the binding of the formylmethionine-tRNA to ribosomes. Seems to function along with eIF-2. The protein is Probable translation initiation factor IF-2 of Methanocorpusculum labreanum (strain ATCC 43576 / DSM 4855 / Z).